We begin with the raw amino-acid sequence, 288 residues long: Probable ketoamine kinase PM0587 (288 aa).

92–94 (EAL) lines the ATP pocket.

The protein belongs to the fructosamine kinase family.

Functionally, ketoamine kinase that phosphorylates ketoamines on the third carbon of the sugar moiety to generate ketoamine 3-phosphate. The sequence is that of Probable ketoamine kinase PM0587 from Pasteurella multocida (strain Pm70).